Reading from the N-terminus, the 373-residue chain is tRNA-specific 2-thiouridylase MnmA (373 aa).

Residues 12-19 (GMSGGVDS) and M38 contribute to the ATP site. The segment at 98-100 (NPD) is interaction with target base in tRNA. C103 functions as the Nucleophile in the catalytic mechanism. A disulfide bond links C103 and C200. G127 is an ATP binding site. The segment at 150–152 (KDQ) is interaction with tRNA. The active-site Cysteine persulfide intermediate is C200. The interval 312-313 (RY) is interaction with tRNA.

Belongs to the MnmA/TRMU family.

The protein resides in the cytoplasm. The catalysed reaction is S-sulfanyl-L-cysteinyl-[protein] + uridine(34) in tRNA + AH2 + ATP = 2-thiouridine(34) in tRNA + L-cysteinyl-[protein] + A + AMP + diphosphate + H(+). In terms of biological role, catalyzes the 2-thiolation of uridine at the wobble position (U34) of tRNA, leading to the formation of s(2)U34. The sequence is that of tRNA-specific 2-thiouridylase MnmA from Streptococcus pneumoniae (strain 70585).